A 417-amino-acid chain; its full sequence is Monooxygenase cfoF (417 aa).

FAD is bound by residues 45 to 48 (DRDK), Arg126, and Asp327. Basic and acidic residues predominate over residues 389–399 (AHTTQLDRDQF). The tract at residues 389–417 (AHTTQLDRDQFTDGSGANDFLVGQQHSDK) is disordered.

Belongs to the aromatic-ring hydroxylase family. KMO subfamily. FAD is required as a cofactor.

Its pathway is secondary metabolite biosynthesis; flavonoid biosynthesis. Monooxygenase; part of the gene cluster that mediates the biosynthesis of chlorflavonin, a fungal flavonoid with acetolactate synthase inhibitory activity. Within the pathway, cfoF is responsible for the hydroxylation of the flavonoid skeleton at position C3. The pathway begins with the PKS-NRPS hybrid synthetase cfoA that uses benzoic acid or p-hydroxybenzoic acid as a starter unit with four rounds of chain elongation using malonyl-CoA to form the chalcone skeleton. Then, a new type of chalcone isomerase, cfoK, catalyzes the conversion of the chalcone into a flavanone by a histidine-mediated oxa-Michael addition mechanism. The desaturation of flavanone to flavone is catalyzed by a new type of flavone synthase, the flavin mononucleotide (FMN)-dependent oxidoreductase cfoJ. Monooxygenases cfoF, cfoG, and P450 cfoH are responsible for the hydroxylation of the flavonoid skeleton at sites C3, C8, and C2', respectively. Like cfoF, the dehydratase cfoI plays also a role in the hydroxylation of position C3. Methyltransferases cfoB, cfoC, and cfoD then catalyze the methylation of C7-OH, C8-OH, and C3-OH, respectively. Finally, the monooxygenase cfoE is responsible for the chlorination of flavonoid at position C3'. The sequence is that of Monooxygenase cfoF from Aspergillus candidus.